Here is a 210-residue protein sequence, read N- to C-terminus: Uracil phosphoribosyltransferase (210 aa).

5-phospho-alpha-D-ribose 1-diphosphate is bound by residues Arg78, Arg103, and 130–138 (DPMLATGGS). Uracil is bound by residues Ile193 and 198-200 (GDA). Residue Asp199 participates in 5-phospho-alpha-D-ribose 1-diphosphate binding.

Belongs to the UPRTase family. Mg(2+) is required as a cofactor.

It catalyses the reaction UMP + diphosphate = 5-phospho-alpha-D-ribose 1-diphosphate + uracil. It functions in the pathway pyrimidine metabolism; UMP biosynthesis via salvage pathway; UMP from uracil: step 1/1. Allosterically activated by GTP. Functionally, catalyzes the conversion of uracil and 5-phospho-alpha-D-ribose 1-diphosphate (PRPP) to UMP and diphosphate. The polypeptide is Uracil phosphoribosyltransferase (Salinibacter ruber (strain DSM 13855 / M31)).